Consider the following 496-residue polypeptide: T-cell activation inhibitor, mitochondrial (496 aa).

Positions 404 to 437 (KAQQARENMKRKEELKVIENELIQASTKKFSLEK) form a coiled coil.

Its subcellular location is the mitochondrion. In terms of biological role, may regulate T-cell apoptosis. This Homo sapiens (Human) protein is T-cell activation inhibitor, mitochondrial (TCAIM).